A 115-amino-acid chain; its full sequence is Probable 4-amino-4-deoxy-L-arabinose-phosphoundecaprenol flippase subunit ArnE (115 aa).

4 consecutive transmembrane segments (helical) span residues 1 to 21 (MIVG…GQLC), 43 to 63 (WLAL…NVLQ), 65 to 85 (LPLS…TLAA), and 93 to 113 (TTAR…LMSI). The 70-residue stretch at 44-113 (LALAVLLLGL…IMLGILLMSI (70 aa)) folds into the EamA domain.

The protein belongs to the ArnE family. Heterodimer of ArnE and ArnF.

The protein localises to the cell inner membrane. Its pathway is bacterial outer membrane biogenesis; lipopolysaccharide biosynthesis. In terms of biological role, translocates 4-amino-4-deoxy-L-arabinose-phosphoundecaprenol (alpha-L-Ara4N-phosphoundecaprenol) from the cytoplasmic to the periplasmic side of the inner membrane. The polypeptide is Probable 4-amino-4-deoxy-L-arabinose-phosphoundecaprenol flippase subunit ArnE (Serratia proteamaculans (strain 568)).